We begin with the raw amino-acid sequence, 339 residues long: UDP-N-acetylenolpyruvoylglucosamine reductase (339 aa).

Residues 19-189 (VDVRAQLFAE…LRVRFALNRV (171 aa)) form the FAD-binding PCMH-type domain. Residue Arg-166 is part of the active site. Ser-239 acts as the Proton donor in catalysis. The active site involves Glu-335.

The protein belongs to the MurB family. Requires FAD as cofactor.

It is found in the cytoplasm. It catalyses the reaction UDP-N-acetyl-alpha-D-muramate + NADP(+) = UDP-N-acetyl-3-O-(1-carboxyvinyl)-alpha-D-glucosamine + NADPH + H(+). Its pathway is cell wall biogenesis; peptidoglycan biosynthesis. Cell wall formation. This Pseudomonas fluorescens (strain Pf0-1) protein is UDP-N-acetylenolpyruvoylglucosamine reductase.